The following is a 237-amino-acid chain: Lipoprotein-releasing system ATP-binding protein LolD (237 aa).

The ABC transporter domain occupies 16–237 (LKCEGLTRIY…LDQGRLSEDA (222 aa)). ATP is bound at residue 52–59 (GSSGSGKT).

It belongs to the ABC transporter superfamily. Lipoprotein translocase (TC 3.A.1.125) family. The complex is composed of two ATP-binding proteins (LolD) and two transmembrane proteins (LolC and LolE).

The protein localises to the cell inner membrane. Part of the ABC transporter complex LolCDE involved in the translocation of mature outer membrane-directed lipoproteins, from the inner membrane to the periplasmic chaperone, LolA. Responsible for the formation of the LolA-lipoprotein complex in an ATP-dependent manner. The polypeptide is Lipoprotein-releasing system ATP-binding protein LolD (Chromohalobacter salexigens (strain ATCC BAA-138 / DSM 3043 / CIP 106854 / NCIMB 13768 / 1H11)).